We begin with the raw amino-acid sequence, 482 residues long: tRNA sulfurtransferase (482 aa).

The THUMP domain occupies leucine 61–arginine 165. ATP is bound by residues leucine 183–isoleucine 184, lysine 265, glycine 287, and glutamine 296. An intrachain disulfide couples cysteine 344 to cysteine 456. The region spanning phenylalanine 404–proline 482 is the Rhodanese domain. Catalysis depends on cysteine 456, which acts as the Cysteine persulfide intermediate.

This sequence belongs to the ThiI family.

It localises to the cytoplasm. It catalyses the reaction [ThiI sulfur-carrier protein]-S-sulfanyl-L-cysteine + a uridine in tRNA + 2 reduced [2Fe-2S]-[ferredoxin] + ATP + H(+) = [ThiI sulfur-carrier protein]-L-cysteine + a 4-thiouridine in tRNA + 2 oxidized [2Fe-2S]-[ferredoxin] + AMP + diphosphate. The catalysed reaction is [ThiS sulfur-carrier protein]-C-terminal Gly-Gly-AMP + S-sulfanyl-L-cysteinyl-[cysteine desulfurase] + AH2 = [ThiS sulfur-carrier protein]-C-terminal-Gly-aminoethanethioate + L-cysteinyl-[cysteine desulfurase] + A + AMP + 2 H(+). The protein operates within cofactor biosynthesis; thiamine diphosphate biosynthesis. In terms of biological role, catalyzes the ATP-dependent transfer of a sulfur to tRNA to produce 4-thiouridine in position 8 of tRNAs, which functions as a near-UV photosensor. Also catalyzes the transfer of sulfur to the sulfur carrier protein ThiS, forming ThiS-thiocarboxylate. This is a step in the synthesis of thiazole, in the thiamine biosynthesis pathway. The sulfur is donated as persulfide by IscS. The sequence is that of tRNA sulfurtransferase from Salmonella heidelberg (strain SL476).